The sequence spans 422 residues: Phytoene synthase 1, chloroplastic (422 aa).

A chloroplast-targeting transit peptide spans 1–70 (MSSSVAVLWV…NRSRRIGVVS (70 aa)).

The protein belongs to the phytoene/squalene synthase family. Monomer. Interacts with OR. Interacts with ORLIKE.

It localises to the plastid. It is found in the chloroplast membrane. The catalysed reaction is 2 (2E,6E,10E)-geranylgeranyl diphosphate = 15-cis-phytoene + 2 diphosphate. Its pathway is carotenoid biosynthesis; phytoene biosynthesis; all-trans-phytoene from geranylgeranyl diphosphate: step 1/1. In terms of biological role, catalyzes the reaction from prephytoene diphosphate to phytoene. This Arabidopsis thaliana (Mouse-ear cress) protein is Phytoene synthase 1, chloroplastic.